The sequence spans 232 residues: Thiamine import ATP-binding protein ThiQ (232 aa).

An ABC transporter domain is found at 2-230 (LKLTDITWLY…KASASALLGI (229 aa)). 32–39 (GPSGAGKS) is an ATP binding site.

This sequence belongs to the ABC transporter superfamily. Thiamine importer (TC 3.A.1.19.1) family. The complex is composed of two ATP-binding proteins (ThiQ), two transmembrane proteins (ThiP) and a solute-binding protein (ThiB).

The protein resides in the cell inner membrane. It catalyses the reaction thiamine(out) + ATP + H2O = thiamine(in) + ADP + phosphate + H(+). Part of the ABC transporter complex ThiBPQ involved in thiamine import. Responsible for energy coupling to the transport system. The protein is Thiamine import ATP-binding protein ThiQ of Escherichia coli (strain K12).